Here is a 418-residue protein sequence, read N- to C-terminus: NADH-quinone oxidoreductase subunit D (418 aa).

The protein belongs to the complex I 49 kDa subunit family. In terms of assembly, NDH-1 is composed of 14 different subunits. Subunits NuoB, C, D, E, F, and G constitute the peripheral sector of the complex.

The protein localises to the cell inner membrane. The enzyme catalyses a quinone + NADH + 5 H(+)(in) = a quinol + NAD(+) + 4 H(+)(out). Functionally, NDH-1 shuttles electrons from NADH, via FMN and iron-sulfur (Fe-S) centers, to quinones in the respiratory chain. The immediate electron acceptor for the enzyme in this species is believed to be ubiquinone. Couples the redox reaction to proton translocation (for every two electrons transferred, four hydrogen ions are translocated across the cytoplasmic membrane), and thus conserves the redox energy in a proton gradient. The sequence is that of NADH-quinone oxidoreductase subunit D from Bordetella avium (strain 197N).